A 758-amino-acid polypeptide reads, in one-letter code: Spastin (758 aa).

The disordered stretch occupies residues M1–H99. Topologically, residues M1 to P121 are cytoplasmic. A required for localization to punctate cytoplasmic foci region spans residues M1 to A210. 4 stretches are compositionally biased toward low complexity: residues S8–G29, R43–S58, S66–P76, and T85–P95. The helical intramembrane region spans I122–Y142. Topologically, residues L143 to I758 are cytoplasmic. Polar residues-rich tracts occupy residues S169–S180 and Q189–Q198. The tract at residues S169–P221 is disordered. The sufficient for interaction with microtubules and microtubule severing stretch occupies residues M208 to I758. The MIT domain maps to H233–L308. Disordered regions lie at residues R353–L376 and N390–P454. Polar residues-rich tracts occupy residues N390–G406 and Q425–P454. The required for interaction with microtubules stretch occupies residues N443–V455. ATP is bound at residue G523–T530.

Belongs to the AAA ATPase family. Spastin subfamily. In terms of assembly, homohexamer. The homohexamer is stabilized by ATP-binding. The homohexamer may adopt a ring conformation through which microtubules pass prior to being severed. Interacts with microtubules. Interacts with atl; may be involved in microtubule dynamics.

It is found in the membrane. It localises to the cytoplasm. The protein resides in the cytoskeleton. The protein localises to the microtubule organizing center. Its subcellular location is the centrosome. It is found in the chromosome. It localises to the lipid droplet. It catalyses the reaction n ATP + n H2O + a microtubule = n ADP + n phosphate + (n+1) alpha/beta tubulin heterodimers.. In terms of biological role, ATP-dependent microtubule severing protein. Stimulates microtubule minus-end depolymerization and poleward microtubule flux in the mitotic spindle. Regulates microtubule stability in the neuromuscular junction synapse. Involved in lipid metabolism by regulating the size and distribution of lipid droplets. Involved in axon regeneration by regulating microtubule severing. This chain is Spastin, found in Drosophila yakuba (Fruit fly).